Here is a 478-residue protein sequence, read N- to C-terminus: Trigger factor (478 aa).

Residues 1 to 41 (MAELADAPDLGSGARKGVRVRLPPPAPHKNGGKNESRGSGQ) form a disordered region. The 83-residue stretch at 197 to 279 (GDMLVVEYEV…IKEIKKKVLP (83 aa)) folds into the PPIase FKBP-type domain. A compositionally biased stretch (basic and acidic residues) spans 455 to 472 (VEQKQEEEKKEEKEEVKN). The interval 455–478 (VEQKQEEEKKEEKEEVKNESQGNT) is disordered.

This sequence belongs to the FKBP-type PPIase family. Tig subfamily.

The protein resides in the cytoplasm. It catalyses the reaction [protein]-peptidylproline (omega=180) = [protein]-peptidylproline (omega=0). Involved in protein export. Acts as a chaperone by maintaining the newly synthesized protein in an open conformation. Functions as a peptidyl-prolyl cis-trans isomerase. This is Trigger factor from Aquifex aeolicus (strain VF5).